Consider the following 254-residue polypeptide: MSVAVRVIPCLDVDAGRVVKGVNFTDLRDAGDPVEMARLYDAEGADELTFLDITASSGDRETTYDIVRRTAEQVFIPLTVGGGVRSVDDVNRLLRAGADKVGINTAAVARPELVRECAHRFGNQCIVISVDARRPPGPDGPRFEVTTHGGRKGTGIDAVAWTARVVELGAGEILLNSMDADGTRDGYDLEMICAVRAEVDVPVIASGGAGDLAHFAPAIDAGADAVLAASVFHFGQLRIGEVKTALRGAGVPVR.

Catalysis depends on residues Asp-12 and Asp-131.

Belongs to the HisA/HisF family. In terms of assembly, heterodimer of HisH and HisF.

The protein resides in the cytoplasm. The enzyme catalyses 5-[(5-phospho-1-deoxy-D-ribulos-1-ylimino)methylamino]-1-(5-phospho-beta-D-ribosyl)imidazole-4-carboxamide + L-glutamine = D-erythro-1-(imidazol-4-yl)glycerol 3-phosphate + 5-amino-1-(5-phospho-beta-D-ribosyl)imidazole-4-carboxamide + L-glutamate + H(+). It participates in amino-acid biosynthesis; L-histidine biosynthesis; L-histidine from 5-phospho-alpha-D-ribose 1-diphosphate: step 5/9. In terms of biological role, IGPS catalyzes the conversion of PRFAR and glutamine to IGP, AICAR and glutamate. The HisF subunit catalyzes the cyclization activity that produces IGP and AICAR from PRFAR using the ammonia provided by the HisH subunit. In Frankia casuarinae (strain DSM 45818 / CECT 9043 / HFP020203 / CcI3), this protein is Imidazole glycerol phosphate synthase subunit HisF.